A 117-amino-acid chain; its full sequence is Immunoglobulin heavy variable 3-74 (117 aa).

The N-terminal stretch at 1–19 is a signal peptide; sequence MEFGLSWVFLVAILKGVQC. The segment at 20–44 is framework-1; it reads EVQLVESGGGLVQPGGSLRLSCAAS. Residues 20–117 enclose the Ig-like domain; that stretch reads EVQLVESGGG…EDTAVYYCAR (98 aa). The cysteines at positions 41 and 115 are disulfide-linked. The segment at 45–52 is complementarity-determining-1; sequence GFTFSSYW. Positions 53 to 69 are framework-2; the sequence is MHWVRQAPGKGLVWVSR. The complementarity-determining-2 stretch occupies residues 70–77; that stretch reads INSDGSST. A framework-3 region spans residues 78–115; that stretch reads SYADSVKGRFTISRDNAKNTLYLQMNSLRAEDTAVYYC. Positions 116 to 117 are complementarity-determining-3; that stretch reads AR.

As to quaternary structure, immunoglobulins are composed of two identical heavy chains and two identical light chains; disulfide-linked.

The protein localises to the secreted. Its subcellular location is the cell membrane. In terms of biological role, v region of the variable domain of immunoglobulin heavy chains that participates in the antigen recognition. Immunoglobulins, also known as antibodies, are membrane-bound or secreted glycoproteins produced by B lymphocytes. In the recognition phase of humoral immunity, the membrane-bound immunoglobulins serve as receptors which, upon binding of a specific antigen, trigger the clonal expansion and differentiation of B lymphocytes into immunoglobulins-secreting plasma cells. Secreted immunoglobulins mediate the effector phase of humoral immunity, which results in the elimination of bound antigens. The antigen binding site is formed by the variable domain of one heavy chain, together with that of its associated light chain. Thus, each immunoglobulin has two antigen binding sites with remarkable affinity for a particular antigen. The variable domains are assembled by a process called V-(D)-J rearrangement and can then be subjected to somatic hypermutations which, after exposure to antigen and selection, allow affinity maturation for a particular antigen. The chain is Immunoglobulin heavy variable 3-74 from Homo sapiens (Human).